Reading from the N-terminus, the 692-residue chain is MARDVLIEIGLEELPARFIDDAELQLYTKTKQWLEENRISSENVISYSTPRRLAVFVKNMAEKQSSIEEDVKGPALKIAKDEDGNWTKAAQGFTKGQGLTTDDIVVREVKGISYIYVTKHIEGRPIQELLPEFKSIIESITFGKNMRWGSETIRYARPIRWLVAMMGNEVIPFEIAHVATNNVTYGHRFLGEEVTIQEPAEYEKTLKDNYVIVKAKDRETLIVEQLSKLEREHGFEIPVDQELLEEVRNLVEFPTAFVGKFEEAYLEIPPEVLITSMKEHQRYFPVHKKGVLQPYFVGVRNGDNYHIETVAKGNEKVLRARLADAEFFYNEDLHQSIDFFQEKLTKVVFQEKLGTYSDKVERMKQIADRISEKLSLESDDRKIIERAAEISKFDLMTSMVNEFTELQGIIGEKYANHFGENSATSQAIKEHYQPKHAKDDLPQTVIGSVVSVADKLDTIAGCIAVGLVPTGSQDPYGLRRQASAILRILHNEKWNLTVEELIDIALDVFQKSNVTIMEKTNEELIEFFRLRAVYLMKDKGLEVDVIHAVTDQKLGNVFVSFEKAKELSDKRNDETFKPIQEALVRVLNLSNKVETNELIREDKLETESEKILYTRYLDIKETYEKQLLHNETKQALATLAQLAAPIHAFFDNNMVMADDLEIRNNRLALIQALTSLILPYADLRKIEWKQQF.

The protein belongs to the class-II aminoacyl-tRNA synthetase family. In terms of assembly, tetramer of two alpha and two beta subunits.

It localises to the cytoplasm. The catalysed reaction is tRNA(Gly) + glycine + ATP = glycyl-tRNA(Gly) + AMP + diphosphate. The polypeptide is Glycine--tRNA ligase beta subunit (Oceanobacillus iheyensis (strain DSM 14371 / CIP 107618 / JCM 11309 / KCTC 3954 / HTE831)).